Consider the following 72-residue polypeptide: UPF0352 protein CGSHiGG_07710 (72 aa).

The protein belongs to the UPF0352 family.

This Haemophilus influenzae (strain PittGG) protein is UPF0352 protein CGSHiGG_07710.